A 283-amino-acid chain; its full sequence is Nucleotide-binding protein DR_1434 (283 aa).

Gly8–Ser15 is a binding site for ATP. Asp57–Thr60 lines the GTP pocket.

Belongs to the RapZ-like family.

In terms of biological role, displays ATPase and GTPase activities. In Deinococcus radiodurans (strain ATCC 13939 / DSM 20539 / JCM 16871 / CCUG 27074 / LMG 4051 / NBRC 15346 / NCIMB 9279 / VKM B-1422 / R1), this protein is Nucleotide-binding protein DR_1434.